Here is a 138-residue protein sequence, read N- to C-terminus: Iron sulfur cluster assembly protein 1 (138 aa).

It belongs to the NifU family. In terms of assembly, component of the core Fe-S cluster (ISC) assembly machinery. [2Fe-2S] cluster serves as cofactor.

It localises to the cytoplasm. It functions in the pathway cofactor biosynthesis; iron-sulfur cluster biosynthesis. In terms of biological role, scaffold protein for the de novo synthesis of iron-sulfur (Fe-S) clusters within mitosomes, which is required for maturation of both [2Fe-2S] and [4Fe-4S] proteins. First, a [2Fe-2S] cluster is transiently assembled on the scaffold protein ISU1. In a second step, the cluster is released from ISU1, transferred to a glutaredoxin, followed by the formation of [2Fe-2S] proteins, the synthesis of [4Fe-4S] clusters and their target-specific insertion into the recipient apoproteins. Cluster assembly on ISU1 depends on the function of the cysteine desulfurase complex NFS1-ISD11, which serves as the sulfur donor for cluster synthesis, the iron-binding protein frataxin as the putative iron donor, and the electron transfer chain comprised of ferredoxin reductase and ferredoxin, which receive their electrons from NADH. This chain is Iron sulfur cluster assembly protein 1 (ISU1), found in Trachipleistophora hominis (Microsporidian parasite).